Here is a 670-residue protein sequence, read N- to C-terminus: DUF724 domain-containing protein 1 (670 aa).

2 disordered regions span residues 283-315 (HNGPQQKPVKESPSNAIKQKPMCSSSGARPMTP) and 368-445 (ANAE…NNDD). 3 stretches are compositionally biased toward polar residues: residues 294 to 309 (SPSNAIKQKPMCSSSG), 379 to 392 (RNQNCLRNDSTQQM), and 426 to 442 (CNGSESEISNTGKSICN). The 186-residue stretch at 484–669 (PFAKKLPFWK…LEFQTTVSTP (186 aa)) folds into the DUF724 domain.

In terms of tissue distribution, expressed in stems and flowers.

It is found in the nucleus. Its function is as follows. May be involved in the polar growth of plant cells via transportation of RNAs. In Arabidopsis thaliana (Mouse-ear cress), this protein is DUF724 domain-containing protein 1.